The primary structure comprises 333 residues: DNA-directed RNA polymerase subunit alpha (333 aa).

An alpha N-terminal domain (alpha-NTD) region spans residues 1 to 246 (MEKFIKINWT…AHLNIIGDVN (246 aa)). An alpha C-terminal domain (alpha-CTD) region spans residues 263–333 (HSKTQNILIQ…YNVFLDKGEE (71 aa)).

This sequence belongs to the RNA polymerase alpha chain family. Homodimer. The RNAP catalytic core consists of 2 alpha, 1 beta, 1 beta' and 1 omega subunit. When a sigma factor is associated with the core the holoenzyme is formed, which can initiate transcription.

The enzyme catalyses RNA(n) + a ribonucleoside 5'-triphosphate = RNA(n+1) + diphosphate. In terms of biological role, DNA-dependent RNA polymerase catalyzes the transcription of DNA into RNA using the four ribonucleoside triphosphates as substrates. This chain is DNA-directed RNA polymerase subunit alpha, found in Mycoplasma mobile (strain ATCC 43663 / 163K / NCTC 11711) (Mesomycoplasma mobile).